Consider the following 1043-residue polypeptide: RNA cytidine acetyltransferase (1043 aa).

ATP-binding positions include 285 to 294 (GRGKSAAVGL) and Arg462. An N-acetyltransferase domain is found at 551–736 (VLMAPIDKSR…VPVYIRQNSN (186 aa)). Residues 622–624 (VAV), 629–635 (QSMGYGG), and Arg723 each bind acetyl-CoA. The tract at residues 1020–1043 (IPDAKDPANKNAKKKKRFSSGGRR) is disordered. Residues 1030–1043 (NAKKKKRFSSGGRR) show a composition bias toward basic residues.

This sequence belongs to the RNA cytidine acetyltransferase family. NAT10 subfamily. As to quaternary structure, part of the small subunit (SSU) processome, composed of more than 70 proteins and the RNA chaperone small nucleolar RNA (snoRNA) U3.

The protein resides in the nucleus. It is found in the nucleolus. It carries out the reaction a cytidine in 18S rRNA + acetyl-CoA + ATP + H2O = an N(4)-acetylcytidine in 18S rRNA + ADP + phosphate + CoA + H(+). It catalyses the reaction a cytidine in tRNA + acetyl-CoA + ATP + H2O = an N(4)-acetylcytidine in tRNA + ADP + phosphate + CoA + H(+). In terms of biological role, RNA cytidine acetyltransferase with specificity toward both 18S rRNA and tRNAs. Catalyzes the formation of N(4)-acetylcytidine (ac4C) in 18S rRNA. Required for early nucleolar cleavages of precursor rRNA at sites A0, A1 and A2 during 18S rRNA synthesis. Catalyzes the formation of ac4C in serine and leucine tRNAs. Requires a tRNA-binding adapter protein for full tRNA acetyltransferase activity but not for 18S rRNA acetylation. Part of the small subunit (SSU) processome, first precursor of the small eukaryotic ribosomal subunit. During the assembly of the SSU processome in the nucleolus, many ribosome biogenesis factors, an RNA chaperone and ribosomal proteins associate with the nascent pre-rRNA and work in concert to generate RNA folding, modifications, rearrangements and cleavage as well as targeted degradation of pre-ribosomal RNA by the RNA exosome. The protein is RNA cytidine acetyltransferase of Caenorhabditis elegans.